Reading from the N-terminus, the 338-residue chain is Fructose-1,6-bisphosphatase class 1 (338 aa).

Positions 91, 113, 115, and 116 each coordinate Mg(2+). Residues 116–119, Asn211, Tyr244, and Lys277 contribute to the substrate site; that span reads DGSS. Glu283 lines the Mg(2+) pocket.

The protein belongs to the FBPase class 1 family. In terms of assembly, homotetramer. Mg(2+) is required as a cofactor.

The protein localises to the cytoplasm. The catalysed reaction is beta-D-fructose 1,6-bisphosphate + H2O = beta-D-fructose 6-phosphate + phosphate. Its pathway is carbohydrate biosynthesis; gluconeogenesis. This Oleidesulfovibrio alaskensis (strain ATCC BAA-1058 / DSM 17464 / G20) (Desulfovibrio alaskensis) protein is Fructose-1,6-bisphosphatase class 1.